Consider the following 307-residue polypeptide: Acyl transferase (307 aa).

Catalysis depends on charge relay system residues Ser116, Asp213, and His243.

This sequence belongs to the LuxD family.

The protein operates within lipid metabolism; fatty acid reduction for biolumincescence. Acyl transferase is part of the fatty acid reductase system required for aldehyde biosynthesis; it produces fatty acids for the luminescent reaction. The sequence is that of Acyl transferase from Photorhabdus luminescens (Xenorhabdus luminescens).